We begin with the raw amino-acid sequence, 323 residues long: UPF0612 protein C569.01c (323 aa).

Coiled-coil stretches lie at residues 27-63 and 131-225; these read IKRY…MKYE and NEMN…DARS.

The protein belongs to the UPF0612 family.

The chain is UPF0612 protein C569.01c from Schizosaccharomyces pombe (strain 972 / ATCC 24843) (Fission yeast).